The chain runs to 218 residues: Small ribosomal subunit protein uS3c (218 aa).

The KH type-2 domain occupies 43-118; that stretch reads IKNYVQKNMK…KLNISITRIE (76 aa).

Belongs to the universal ribosomal protein uS3 family. As to quaternary structure, part of the 30S ribosomal subunit.

It is found in the plastid. It localises to the chloroplast. In Populus alba (White poplar), this protein is Small ribosomal subunit protein uS3c (rps3).